An 86-amino-acid chain; its full sequence is Weak neurotoxin 6 (86 aa).

The N-terminal stretch at 1–21 (MKTLLLTLVVVTIVCLDLGYT) is a signal peptide. 5 disulfides stabilise this stretch: Cys24/Cys45, Cys27/Cys32, Cys38/Cys63, Cys67/Cys78, and Cys79/Cys84.

Belongs to the three-finger toxin family. Ancestral subfamily. Orphan group II sub-subfamily. As to expression, expressed by the venom gland.

The protein resides in the secreted. Binds with low affinity to muscular (alpha-1-beta-1-delta-epsilon/CHRNA1-CHRNB1-CHRND-CHRNE) and very low affinity to neuronal (alpha-7/CHRNA7) nicotinic acetylcholine receptor (nAChR). The polypeptide is Weak neurotoxin 6 (Naja sputatrix (Malayan spitting cobra)).